Consider the following 379-residue polypeptide: Cytochrome b (379 aa).

4 helical membrane passes run Phe-33 to Met-53, Trp-77 to Val-98, Trp-113 to Leu-133, and Phe-178 to Leu-198. Heme b contacts are provided by His-83 and His-97. Heme b is bound by residues His-182 and His-196. His-201 contributes to the a ubiquinone binding site. Transmembrane regions (helical) follow at residues Thr-226–Phe-246, Leu-288–Asn-308, Val-320–Gly-340, and Phe-347–Pro-367.

Belongs to the cytochrome b family. In terms of assembly, the cytochrome bc1 complex contains 11 subunits: 3 respiratory subunits (MT-CYB, CYC1 and UQCRFS1), 2 core proteins (UQCRC1 and UQCRC2) and 6 low-molecular weight proteins (UQCRH/QCR6, UQCRB/QCR7, UQCRQ/QCR8, UQCR10/QCR9, UQCR11/QCR10 and a cleavage product of UQCRFS1). This cytochrome bc1 complex then forms a dimer. Heme b serves as cofactor.

The protein resides in the mitochondrion inner membrane. Its function is as follows. Component of the ubiquinol-cytochrome c reductase complex (complex III or cytochrome b-c1 complex) that is part of the mitochondrial respiratory chain. The b-c1 complex mediates electron transfer from ubiquinol to cytochrome c. Contributes to the generation of a proton gradient across the mitochondrial membrane that is then used for ATP synthesis. In Akodon cursor (Cursor grass mouse), this protein is Cytochrome b (MT-CYB).